Consider the following 268-residue polypeptide: Diaminopimelate epimerase (268 aa).

Asparagine 13, glutamine 46, and asparagine 64 together coordinate substrate. The active-site Proton donor is the cysteine 73. Residues 74-75 (GN), asparagine 148, asparagine 181, and 199-200 (ER) each bind substrate. The active-site Proton acceptor is the cysteine 208. Residue 209–210 (GT) coordinates substrate.

This sequence belongs to the diaminopimelate epimerase family. As to quaternary structure, homodimer.

The protein localises to the cytoplasm. The catalysed reaction is (2S,6S)-2,6-diaminopimelate = meso-2,6-diaminopimelate. The protein operates within amino-acid biosynthesis; L-lysine biosynthesis via DAP pathway; DL-2,6-diaminopimelate from LL-2,6-diaminopimelate: step 1/1. Catalyzes the stereoinversion of LL-2,6-diaminopimelate (L,L-DAP) to meso-diaminopimelate (meso-DAP), a precursor of L-lysine and an essential component of the bacterial peptidoglycan. This is Diaminopimelate epimerase from Sphingopyxis alaskensis (strain DSM 13593 / LMG 18877 / RB2256) (Sphingomonas alaskensis).